Reading from the N-terminus, the 103-residue chain is MIGKEVTVRDIVLELSEVQPEVLPVDLFCDEELPNEQQAEEELDIDRVVFKVIAPCGCSCCEVKLRIFVNATNRGIRTFQELLTGDLQLLCPECRGNCKHGGF.

Positions 1 to 45 (MIGKEVTVRDIVLELSEVQPEVLPVDLFCDEELPNEQQAEEELDI) are E7 terminal domain. The LXCXE motif; interaction with host RB1 and TMEM173/STING signature appears at 27-31 (LFCDE). A zinc finger lies at 56-94 (CGCSCCEVKLRIFVNATNRGIRTFQELLTGDLQLLCPEC). The short motif at 76-84 (IRTFQELLT) is the Nuclear export signal element.

Belongs to the papillomaviridae E7 protein family. In terms of assembly, homodimer. Homooligomer. Interacts with host RB1; this interaction induces dissociation of RB1-E2F1 complex thereby disrupting RB1 activity. Interacts with host EP300; this interaction represses EP300 transcriptional activity. Interacts with protein E2; this interaction inhibits E7 oncogenic activity. Interacts with host TMEM173/STING; this interaction impairs the ability of TMEM173/STING to sense cytosolic DNA and promote the production of type I interferon (IFN-alpha and IFN-beta). Highly phosphorylated.

Its subcellular location is the host cytoplasm. It localises to the host nucleus. Functionally, plays a role in viral genome replication by driving entry of quiescent cells into the cell cycle. Stimulation of progression from G1 to S phase allows the virus to efficiently use the cellular DNA replicating machinery to achieve viral genome replication. E7 protein has both transforming and trans-activating activities. Induces the disassembly of the E2F1 transcription factor from RB1, with subsequent transcriptional activation of E2F1-regulated S-phase genes. Interferes with host histone deacetylation mediated by HDAC1 and HDAC2, leading to transcription activation. Also plays a role in the inhibition of both antiviral and antiproliferative functions of host interferon alpha. Interaction with host TMEM173/STING impairs the ability of TMEM173/STING to sense cytosolic DNA and promote the production of type I interferon (IFN-alpha and IFN-beta). The sequence is that of Protein E7 from Homo sapiens (Human).